Consider the following 50-residue polypeptide: Defensin D1 (50 aa).

Cystine bridges form between Cys3-Cys50, Cys14-Cys35, Cys20-Cys44, and Cys24-Cys46.

Contains 4 disulfide bonds.

The protein resides in the secreted. Antimicrobial peptide active against fungi, Gram-positive and Gram-negative bacteria. Inhibits growth of hyphae in the fungi A.niger (IC(50)=3.5 ug/ml), B.sorokiniana (IC(50)=3.0 ug/ml), F.oxysporum (IC(50)=9.5 ug/ml), F.graminearum (IC(50)=6.9 ug/ml), F.culmorum (IC(50)=6.9 ug/ml) and B.cinerea (IC(50)=27.4 ug/ml). Has no effect on spore germination. Destroys spores in germinated conidia by disruption of cell walls and membranes in A.niger and B.sorokiniana. Causes vacuolization of germinated macro- and microconidia in F.oxysporum, F.graminearum and F.culmorum. Strongly inhibits growth of P.infestans on potato tubers above concentrations of 13.6 ug/ml. Inhibits growth of Gram-positive bacteria C.michiganensis and B.subtilis and of Gram-negative bacteria P.syringae, E.carotovora and E.coli. The sequence is that of Defensin D1 from Nigella sativa (Black cumin).